The chain runs to 561 residues: Lysine--tRNA ligase (561 aa).

Mg(2+)-binding residues include Glu-409 and Glu-416.

Belongs to the class-II aminoacyl-tRNA synthetase family. Homodimer. Mg(2+) is required as a cofactor.

The protein localises to the cytoplasm. The enzyme catalyses tRNA(Lys) + L-lysine + ATP = L-lysyl-tRNA(Lys) + AMP + diphosphate. This is Lysine--tRNA ligase from Nostoc sp. (strain PCC 7120 / SAG 25.82 / UTEX 2576).